The sequence spans 937 residues: Scaffold attachment factor B1 (937 aa).

The segment at 1–35 is disordered; that stretch reads MAETLSGLGDASAAGAAAVSSAASETGTRRLSDLR. Ala-2 is subject to N-acetylalanine. The span at 11 to 24 shows a compositional bias: low complexity; that stretch reads ASAAGAAAVSSAAS. Phosphoserine occurs at positions 24 and 55. One can recognise an SAP domain in the interval 31-65; sequence LSDLRVIDLRAELKKRNLDSSGNKSVLMERLKKAI. Positions 64–117 are disordered; that stretch reads AIEDEGGNPDEIEVTSECNKKMPKRPSKGRKPEDEGVEDNGLEENSGDGQEDVE. Residues 67–77 are compositionally biased toward acidic residues; it reads DEGGNPDEIEV. Ser-79 carries the phosphoserine modification. A compositionally biased stretch (acidic residues) spans 98-117; it reads EGVEDNGLEENSGDGQEDVE. Glycyl lysine isopeptide (Lys-Gly) (interchain with G-Cter in SUMO2) cross-links involve residues Lys-172 and Lys-186. Thr-188 carries the phosphothreonine modification. A phosphoserine mark is found at Ser-195, Ser-197, and Ser-209. The tract at residues 222-429 is disordered; that stretch reads GETCKSEPVK…EKGRSSCGRN (208 aa). The span at 225–234 shows a compositional bias: basic and acidic residues; it reads CKSEPVKEEG. Lys-231 participates in a covalent cross-link: Glycyl lysine isopeptide (Lys-Gly) (interchain with G-Cter in SUMO). The segment covering 268-287 has biased composition (acidic residues); the sequence is EEEEEEEEEDQEEEQEEEGD. A Glycyl lysine isopeptide (Lys-Gly) (interchain with G-Cter in SUMO) cross-link involves residue Lys-316. Residues 341–356 show a composition bias toward polar residues; that stretch reads EQSSTAAQLPEATSQE. The span at 370–380 shows a compositional bias: basic and acidic residues; the sequence is QDSKEDVKKFA. Lys-403 is covalently cross-linked (Glycyl lysine isopeptide (Lys-Gly) (interchain with G-Cter in SUMO2)). A phosphoserine mark is found at Ser-405 and Ser-406. Over residues 412-423 the composition is skewed to basic and acidic residues; the sequence is DTKRLSREEKGR. A Glycyl lysine isopeptide (Lys-Gly) (interchain with G-Cter in SUMO2) cross-link involves residue Lys-414. The 79-residue stretch at 428 to 506 folds into the RRM domain; sequence RNFWVSGLSS…KMISVEKAKS (79 aa). Ser-437 is modified (phosphoserine). Basic and acidic residues-rich tracts occupy residues 499–573 and 581–592; these read ISVE…ERSR and GTERTVVMDKSK. Disordered regions lie at residues 499–661, 684–738, and 771–937; these read ISVE…WERE, RMER…YEVD, and FDHR…TRRY. Glycyl lysine isopeptide (Lys-Gly) (interchain with G-Cter in SUMO2) cross-links involve residues Lys-505, Lys-536, Lys-565, and Lys-592. Positions 550 to 814 are interaction with POLR2A; SFRS1; SFRS9 and SFRS10; the sequence is TDDGSTEKSK…RHGGPERHGR (265 aa). Lys-600 is covalently cross-linked (Glycyl lysine isopeptide (Lys-Gly) (interchain with G-Cter in SUMO1); alternate). Residue Lys-600 forms a Glycyl lysine isopeptide (Lys-Gly) (interchain with G-Cter in SUMO2); alternate linkage. Phosphoserine is present on residues Ser-602, Ser-604, Ser-623, and Ser-626. Residues 603–661 are compositionally biased toward basic and acidic residues; sequence GSKERASKSQDRKSASREKRSVVSFDKVKESRKSRDSESRRERERSEREQRLQAQWERE. The Nuclear localization signal motif lies at 621-638; the sequence is KRSVVSFDKVKESRKSRD. Residues 621 to 937 form an interaction with SAFB2 region; the sequence is KRSVVSFDKV…PSDARFTRRY (317 aa). Position 629 is an N6-acetyllysine (Lys-629). Residues 652 to 726 are a coiled coil; that stretch reads QRLQAQWERE…RQQELRYEQE (75 aa). The span at 771-818 shows a compositional bias: basic and acidic residues; it reads FDHRDRGRYPNHSVDRREGSRSMMGDREGQHYPERHGGPERHGRDSRD. Position 832 is an omega-N-methylarginine (Arg-832). Composition is skewed to basic and acidic residues over residues 838–854 and 863–873; these read PRRD…DDRA and MMERDHKRWQG. Lys-869 participates in a covalent cross-link: Glycyl lysine isopeptide (Lys-Gly) (interchain with G-Cter in SUMO2). Residues Arg-890, Arg-896, Arg-906, and Arg-912 each carry the asymmetric dimethylarginine modification. The segment covering 927–937 has biased composition (basic and acidic residues); sequence RPSDARFTRRY.

As to quaternary structure, monomer and homodimer. Forms heterodimers with SAFB2. Interacts with KHDRBS3. Interacts with CLK2. Interacts with POLR2A, ASF/SRSF1, SRp30c/SRFS9 and TRA2B/SFRS10. Interacts with SRPK1 and inhibits its activity. Interacts with RBMX. Interacts with FUS. Interacts with ZBED4. Post-translationally, sumoylated by PIAS1 with SUMO1 and SUMO2/3, desumoylated by SENP1. Sumoylation is required for transcriptional repressor activity.

It is found in the nucleus. Functionally, binds to scaffold/matrix attachment region (S/MAR) DNA and forms a molecular assembly point to allow the formation of a 'transcriptosomal' complex (consisting of SR proteins and RNA polymerase II) coupling transcription and RNA processing. Functions as an estrogen receptor corepressor and can also bind to the HSP27 promoter and decrease its transcription. Thereby acts as a negative regulator of cell proliferation. When associated with RBMX, binds to and stimulates transcription from the SREBF1 promoter. The polypeptide is Scaffold attachment factor B1 (Safb) (Mus musculus (Mouse)).